We begin with the raw amino-acid sequence, 348 residues long: Phosphate acyltransferase (348 aa).

The protein belongs to the PlsX family. In terms of assembly, homodimer. Probably interacts with PlsY.

The protein resides in the cytoplasm. The catalysed reaction is a fatty acyl-[ACP] + phosphate = an acyl phosphate + holo-[ACP]. It participates in lipid metabolism; phospholipid metabolism. Functionally, catalyzes the reversible formation of acyl-phosphate (acyl-PO(4)) from acyl-[acyl-carrier-protein] (acyl-ACP). This enzyme utilizes acyl-ACP as fatty acyl donor, but not acyl-CoA. The protein is Phosphate acyltransferase of Lactiplantibacillus plantarum (strain ATCC BAA-793 / NCIMB 8826 / WCFS1) (Lactobacillus plantarum).